The chain runs to 170 residues: Large ribosomal subunit protein uL18m (170 aa).

This sequence belongs to the universal ribosomal protein uL18 family. In terms of assembly, component of the mitochondrial ribosome large subunit (39S) which comprises a 16S rRNA and about 50 distinct proteins.

The protein localises to the mitochondrion. This is Large ribosomal subunit protein uL18m (mrpl-18) from Caenorhabditis elegans.